The sequence spans 462 residues: Nuclear factor interleukin-3-regulated protein (462 aa).

Lys-24 participates in a covalent cross-link: Glycyl lysine isopeptide (Lys-Gly) (interchain with G-Cter in SUMO2). The bZIP domain maps to 73–136; sequence DAMYWEKRRK…GLISSTAYAQ (64 aa). The tract at residues 79–95 is basic motif; it reads KRRKNNEAAKRSREKRR. The segment at 99–106 is leucine-zipper; the sequence is LVLENKLI. Disordered regions lie at residues 189–236 and 254–303; these read DVSE…RDDR and GYSH…HSPV. Lys-214 participates in a covalent cross-link: Glycyl lysine isopeptide (Lys-Gly) (interchain with G-Cter in SUMO2). Lys-219 participates in a covalent cross-link: Glycyl lysine isopeptide (Lys-Gly) (interchain with G-Cter in SUMO1); alternate. Residue Lys-219 forms a Glycyl lysine isopeptide (Lys-Gly) (interchain with G-Cter in SUMO2); alternate linkage. Residues 227–236 show a composition bias toward basic and acidic residues; it reads SYAREPRDDR. Residues 264 to 274 show a composition bias toward polar residues; sequence VNRSSSNSPRT. At Ser-301 the chain carries Phosphoserine. Glycyl lysine isopeptide (Lys-Gly) (interchain with G-Cter in SUMO2) cross-links involve residues Lys-314, Lys-326, Lys-332, Lys-337, and Lys-350. Ser-353 carries the phosphoserine modification. Glycyl lysine isopeptide (Lys-Gly) (interchain with G-Cter in SUMO2) cross-links involve residues Lys-360, Lys-394, Lys-401, Lys-406, Lys-412, Lys-419, Lys-424, Lys-434, and Lys-448.

It belongs to the bZIP family. NFIL3 subfamily. Homodimer. Binds DNA as a dimer. Interacts with CRY2, DR1 and PER2. Interacts with NR0B2. Interacts with MYSM1.

The protein resides in the nucleus. Acts as a transcriptional regulator that recognizes and binds to the sequence 5'-[GA]TTA[CT]GTAA[CT]-3', a sequence present in many cellular and viral promoters. Represses transcription from promoters with activating transcription factor (ATF) sites. Represses promoter activity in osteoblasts. Represses transcriptional activity of PER1. Represses transcriptional activity of PER2 via the B-site on the promoter. Activates transcription from the interleukin-3 promoter in T-cells. Competes for the same consensus-binding site with PAR DNA-binding factors (DBP, HLF and TEF). Component of the circadian clock that acts as a negative regulator for the circadian expression of PER2 oscillation in the cell-autonomous core clock. Protects pro-B cells from programmed cell death. Represses the transcription of CYP2A5. Positively regulates the expression and activity of CES2 by antagonizing the repressive action of NR1D1 on CES2. Required for the development of natural killer cell precursors. The polypeptide is Nuclear factor interleukin-3-regulated protein (NFIL3) (Bos taurus (Bovine)).